The sequence spans 207 residues: Guanylate kinase (207 aa).

Residues 5–184 enclose the Guanylate kinase-like domain; it reads GNLFIVSAPS…ALADLRAIIR (180 aa). 12–19 contributes to the ATP binding site; it reads APSGAGKS.

Belongs to the guanylate kinase family.

It localises to the cytoplasm. The enzyme catalyses GMP + ATP = GDP + ADP. In terms of biological role, essential for recycling GMP and indirectly, cGMP. This is Guanylate kinase from Shewanella oneidensis (strain ATCC 700550 / JCM 31522 / CIP 106686 / LMG 19005 / NCIMB 14063 / MR-1).